We begin with the raw amino-acid sequence, 151 residues long: IFN signaling evasion protein OPG029 (151 aa).

This sequence belongs to the orthopoxvirus OPG029 family. In terms of assembly, interacts with host TANK, TBKBP1 and AZI2; these interactions prevent interferon production. Interacts with host STAT2.

Prevents establishment of cellular antiviral state by blocking virus-induced phosphorylation and activation of interferon regulatory factors 3/IRF3 and 7/IRF7, transcription factors critical for the induction of interferons alpha and beta. This blockage is produced through the inhibition of host TBK1, by binding host TBK1 adapter proteins TBKBP1 and AZI2, thereby producing a strong inhibition of the phosphorylation and activation of IRF3 and IRF7. Also acts as an inhibitor of the cellular response to type I IFN by interacting with host STAT2. Mechanistically, exerts its inhibitory effect after host ISGF3 complex (composed of STAT1, STAT2 and IRF9) binding to the interferon stimulated response element (ISRE). This Homo sapiens (Human) protein is IFN signaling evasion protein OPG029 (OPG029).